The chain runs to 55 residues: Large ribosomal subunit protein bL33 (55 aa).

It belongs to the bacterial ribosomal protein bL33 family.

This Vibrio atlanticus (strain LGP32) (Vibrio splendidus (strain Mel32)) protein is Large ribosomal subunit protein bL33.